We begin with the raw amino-acid sequence, 896 residues long: Desmocollin-3 (896 aa).

Residues 1-31 (MVVPEFRSPQCRALCTKLLLTLWVFSFVGEA) form the signal peptide. Positions 32–135 (CKKVTFHVPS…KETVLRRSKR (104 aa)) are excised as a propeptide. 5 consecutive Cadherin domains span residues 136–243 (RWAP…YPLF), 244–355 (TEAI…APTF), 356–472 (RQNT…GPEC), 473–580 (KPPE…EIIQ), and 581–691 (DYIV…TLGK). The Extracellular segment spans residues 136 to 695 (RWAPIPCSMQ…GITLGKWAIL (560 aa)). An N-linked (GlcNAc...) asparagine glycan is attached at asparagine 166. N-linked (GlcNAc...) asparagine glycans are attached at residues asparagine 392 and asparagine 547. N-linked (GlcNAc...) (high mannose) asparagine glycosylation is present at asparagine 630. Residues 696-716 (AILLGIALLFSVLLTLVCGVV) form a helical membrane-spanning segment. At 717–896 (TARKGKHFPE…LTLAETCTKR (180 aa)) the chain is on the cytoplasmic side.

May form homodimers. Interacts with DSG1; there is evidence to suggest that the interaction promotes cell-cell adhesion of keratinocytes. In terms of tissue distribution, expressed in the basal layers of epidermal stratified epithelia from birth (at protein level).

It localises to the cell membrane. It is found in the cell junction. Its subcellular location is the desmosome. The protein localises to the cytoplasm. Its function is as follows. A component of desmosome cell-cell junctions which are required for positive regulation of cellular adhesion. Required for cell-cell adhesion in the epidermis, as a result required for the maintenance of the dermal cohesion and the dermal barrier function. Required for cell-cell adhesion of epithelial cell layers surrounding the telogen hair club, as a result plays an important role in telogen hair shaft anchorage. Essential for successful completion of embryo compaction and development beyond the 8-cell stage. In Mus musculus (Mouse), this protein is Desmocollin-3 (Dsc3).